The sequence spans 50 residues: Kappa-actitoxin-Bcs4a (50 aa).

It belongs to the sea anemone type 5 potassium channel toxin family. Post-translationally, contains 4 disulfide bonds.

The protein localises to the secreted. It is found in the nematocyst. Its function is as follows. Inhibits voltage-gated potassium channels (Kv1/KCNA). Is potent on Drosophila Shaker IR channels (IC(50)=94.25 nM), and rKv1.2/KCNA2 (IC(50)=172.59 nM), and moderately active on hKv1.3/KCNA3 (IC(50)=1006.48 nM), rKv1.6/KCNA6 (IC(50)=2245.93 nM), and Kv1.1/KCNA1 (IC(50) around 3 uM). In vivo, induces a rapid increase in swimming speed on zebrafish larvae, as well as death which occurs between 2 and 18 hours later. Also paralyzes swimming crabs (C.danae) when injected at the junction between the body and the walking leg. This chain is Kappa-actitoxin-Bcs4a, found in Bunodosoma caissarum (Sea anemone).